Consider the following 348-residue polypeptide: Mitogen-activated protein kinase 14B (348 aa).

In terms of domain architecture, Protein kinase spans 25–309 (YQNLSPVGSG…ASQALAHPYF (285 aa)). ATP-binding positions include 31–39 (VGSGAYGSV) and Lys54. The active-site Proton acceptor is the Asp169. Position 181 is a phosphothreonine; by MAP2K3 (Thr181). A TXY motif is present at residues 181-183 (TGY). Residue Tyr183 is modified to Phosphotyrosine; by MAP2K3.

The protein belongs to the protein kinase superfamily. CMGC Ser/Thr protein kinase family. MAP kinase subfamily. Mg(2+) serves as cofactor. Dually phosphorylated on Thr-181 and Tyr-183, which activates the enzyme.

It is found in the cytoplasm. It localises to the nucleus. It carries out the reaction L-seryl-[protein] + ATP = O-phospho-L-seryl-[protein] + ADP + H(+). It catalyses the reaction L-threonyl-[protein] + ATP = O-phospho-L-threonyl-[protein] + ADP + H(+). Activated by threonine and tyrosine phosphorylation by the dual specificity kinase, MKK3. Serine/threonine kinase which acts as an essential component of the MAP kinase signal transduction pathway. Mapk14b is one of the four p38 MAPKs which play an important role in the cascades of cellular responses evoked by extracellular stimuli such as pro-inflammatory cytokines or physical stress leading to direct activation of transcription factors. Accordingly, p38 MAPKs phosphorylate a broad range of proteins and it has been estimated that they may have approximately 200 to 300 substrates each. Some of the targets are downstream kinases which are activated through phosphorylation and further phosphorylate additional targets. This Danio rerio (Zebrafish) protein is Mitogen-activated protein kinase 14B (mapk14b).